An 83-amino-acid polypeptide reads, in one-letter code: Mu-theraphotoxin-Hhn2f (83 aa).

The first 21 residues, 1-21 (MKASMFLALAGLVLLFVVGYA), serve as a signal peptide directing secretion. A propeptide spanning residues 22-48 (SESEEKEFPIELLSKIFAVDVFKGEER) is cleaved from the precursor. 3 cysteine pairs are disulfide-bonded: cysteine 50–cysteine 65, cysteine 57–cysteine 70, and cysteine 64–cysteine 77. Leucine 81 carries the leucine amide modification.

The protein belongs to the neurotoxin 10 (Hwtx-1) family. 15 (Hntx-3) subfamily. In terms of assembly, monomer. Expressed by the venom gland.

It is found in the secreted. In terms of biological role, lethal neurotoxin. Selectively blocks tetrodotoxin-sensitive voltage-gated sodium channels (Nav). Does not affect tetrodotoxin-resistant voltage-gated sodium channels or calcium channels. The chain is Mu-theraphotoxin-Hhn2f from Cyriopagopus hainanus (Chinese bird spider).